Reading from the N-terminus, the 98-residue chain is Large ribosomal subunit protein uL23 (98 aa).

This sequence belongs to the universal ribosomal protein uL23 family. As to quaternary structure, part of the 50S ribosomal subunit. Contacts protein L29, and trigger factor when it is bound to the ribosome.

Functionally, one of the early assembly proteins it binds 23S rRNA. One of the proteins that surrounds the polypeptide exit tunnel on the outside of the ribosome. Forms the main docking site for trigger factor binding to the ribosome. This chain is Large ribosomal subunit protein uL23, found in Alcanivorax borkumensis (strain ATCC 700651 / DSM 11573 / NCIMB 13689 / SK2).